The chain runs to 149 residues: Transthyretin (149 aa).

The signal sequence occupies residues 1 to 20; the sequence is MAFHSLLLLCLAGLVFLSEA. The residue at position 32 (C32) is a Sulfocysteine. Position 37 (K37) interacts with L-thyroxine. The residue at position 64 (E64) is a 4-carboxyglutamate. The L-thyroxine site is built by E76 and S139.

The protein belongs to the transthyretin family. Homotetramer. Dimer of dimers. In the homotetramer, subunits assemble around a central channel that can accommodate two ligand molecules. Interacts with RBP4. Sulfonation of the reactive cysteine Cys-32 enhances the stability of the native conformation of TTR, avoiding misassembly of the protein leading to amyloid formation. Highly expressed in the choroid plexus.

It is found in the secreted. Thyroid hormone-binding protein. Probably transports thyroxine from the bloodstream to the brain. The chain is Transthyretin (TTR) from Sminthopsis macroura (Stripe-faced dunnart).